Here is a 752-residue protein sequence, read N- to C-terminus: Cation-transporting P-type ATPase B (752 aa).

The 64-residue stretch at Arg-15–Ala-78 folds into the HMA domain. Residues Cys-26 and Cys-29 each coordinate a metal cation. The next 6 membrane-spanning stretches (helical) occupy residues Leu-105–Val-125, Gly-132–Phe-152, Met-167–Phe-187, Ala-201–Leu-221, Ile-361–Leu-381, and Ala-390–Thr-410. The 4-aspartylphosphate intermediate role is filled by Asp-446. Residues Ala-714 to Phe-734 traverse the membrane as a helical segment.

It belongs to the cation transport ATPase (P-type) (TC 3.A.3) family. Type IB subfamily.

The protein localises to the cell membrane. The enzyme catalyses ATP + H2O = ADP + phosphate + H(+). This Mycobacterium bovis (strain ATCC BAA-935 / AF2122/97) protein is Cation-transporting P-type ATPase B (ctpB).